Reading from the N-terminus, the 75-residue chain is MKNVRKIFTAIIEYDPEKKQYVGMVPDVPGVHTVGSSLEEVRRNLKEVLELVLEEAGDEINLQEFVALEMIEVET.

It belongs to the UPF0150 family.

The polypeptide is UPF0150 protein TM_1313 (Thermotoga maritima (strain ATCC 43589 / DSM 3109 / JCM 10099 / NBRC 100826 / MSB8)).